Reading from the N-terminus, the 97-residue chain is Large ribosomal subunit protein eL21 (97 aa).

It belongs to the eukaryotic ribosomal protein eL21 family.

This chain is Large ribosomal subunit protein eL21, found in Methanospirillum hungatei JF-1 (strain ATCC 27890 / DSM 864 / NBRC 100397 / JF-1).